A 322-amino-acid polypeptide reads, in one-letter code: 4-diphosphocytidyl-2-C-methyl-D-erythritol kinase (322 aa).

The active site involves lysine 18. 130 to 140 (PMGAGLGGGSS) is a binding site for ATP. Aspartate 172 is an active-site residue.

This sequence belongs to the GHMP kinase family. IspE subfamily.

The catalysed reaction is 4-CDP-2-C-methyl-D-erythritol + ATP = 4-CDP-2-C-methyl-D-erythritol 2-phosphate + ADP + H(+). Its pathway is isoprenoid biosynthesis; isopentenyl diphosphate biosynthesis via DXP pathway; isopentenyl diphosphate from 1-deoxy-D-xylulose 5-phosphate: step 3/6. Functionally, catalyzes the phosphorylation of the position 2 hydroxy group of 4-diphosphocytidyl-2C-methyl-D-erythritol. This Psychrobacter arcticus (strain DSM 17307 / VKM B-2377 / 273-4) protein is 4-diphosphocytidyl-2-C-methyl-D-erythritol kinase.